Here is a 301-residue protein sequence, read N- to C-terminus: Inosose dehydratase (301 aa).

The protein belongs to the IolE/MocC family. It depends on glutathione as a cofactor. Requires Co(2+) as cofactor. Mn(2+) is required as a cofactor.

The catalysed reaction is scyllo-inosose = 3D-3,5/4-trihydroxycyclohexane-1,2-dione + H2O. In terms of biological role, catalyzes the dehydration of inosose (2-keto-myo-inositol, 2KMI or 2,4,6/3,5-pentahydroxycyclohexanone) to 3D-(3,5/4)-trihydroxycyclohexane-1,2-dione (D-2,3-diketo-4-deoxy-epi-inositol). The chain is Inosose dehydratase from Salmonella typhimurium (strain LT2 / SGSC1412 / ATCC 700720).